We begin with the raw amino-acid sequence, 338 residues long: Lipoate-protein ligase A (338 aa).

One can recognise a BPL/LPL catalytic domain in the interval 29–216 (PATQRVLFLW…AFFAHYGERV (188 aa)). ATP is bound by residues Arg71, 76–79 (GAVF), and Lys134. Residue Lys134 participates in (R)-lipoate binding.

This sequence belongs to the LplA family. As to quaternary structure, monomer.

It is found in the cytoplasm. It catalyses the reaction L-lysyl-[lipoyl-carrier protein] + (R)-lipoate + ATP = N(6)-[(R)-lipoyl]-L-lysyl-[lipoyl-carrier protein] + AMP + diphosphate + H(+). Its pathway is protein modification; protein lipoylation via exogenous pathway; protein N(6)-(lipoyl)lysine from lipoate: step 1/2. The protein operates within protein modification; protein lipoylation via exogenous pathway; protein N(6)-(lipoyl)lysine from lipoate: step 2/2. Functionally, catalyzes both the ATP-dependent activation of exogenously supplied lipoate to lipoyl-AMP and the transfer of the activated lipoyl onto the lipoyl domains of lipoate-dependent enzymes. This is Lipoate-protein ligase A from Escherichia coli (strain 55989 / EAEC).